A 114-amino-acid chain; its full sequence is Class I hydrophobin 1 (114 aa).

The signal sequence occupies residues 1 to 20; the sequence is MQFTKMSAFATLALATLAAA. Intrachain disulfides connect C33–C93, C40–C87, C41–C74, and C94–C107.

This sequence belongs to the fungal hydrophobin family. Self-assembles to form functional amyloid fibrils called rodlets. Self-assembly into fibrillar rodlets occurs spontaneously at hydrophobic:hydrophilic interfaces and the rodlets further associate laterally to form amphipathic monolayers.

It is found in the secreted. The protein resides in the cell wall. In terms of biological role, aerial growth, conidiation, and dispersal of filamentous fungi in the environment rely upon a capability of their secreting small amphipathic proteins called hydrophobins (HPBs) with low sequence identity. Class I can self-assemble into an outermost layer of rodlet bundles on aerial cell surfaces, conferring cellular hydrophobicity that supports fungal growth, development and dispersal; whereas Class II form highly ordered films at water-air interfaces through intermolecular interactions but contribute nothing to the rodlet structure. Pnh1 is a class I hydrophobin that might be involved in the attachment of the hydrophilic wall of hyphae to the hydrophobic surface of wood under inorganic phosphate (Pi)-deficient conditions and enable the mycelium to degrade efficiently the components of wood and to acquire nutrients containing Pi. The sequence is that of Class I hydrophobin 1 from Pholiota nameko.